Consider the following 1223-residue polypeptide: DNA-directed RNA polymerase subunit beta' (1223 aa).

Zn(2+) is bound by residues Cys60, Cys62, Cys75, and Cys78. Positions 449, 451, and 453 each coordinate Mg(2+). Positions 818, 892, 899, and 902 each coordinate Zn(2+).

It belongs to the RNA polymerase beta' chain family. In terms of assembly, the RNAP catalytic core consists of 2 alpha, 1 beta, 1 beta' and 1 omega subunit. When a sigma factor is associated with the core the holoenzyme is formed, which can initiate transcription. Mg(2+) serves as cofactor. Requires Zn(2+) as cofactor.

It catalyses the reaction RNA(n) + a ribonucleoside 5'-triphosphate = RNA(n+1) + diphosphate. In terms of biological role, DNA-dependent RNA polymerase catalyzes the transcription of DNA into RNA using the four ribonucleoside triphosphates as substrates. In Lactobacillus gasseri (strain ATCC 33323 / DSM 20243 / BCRC 14619 / CIP 102991 / JCM 1131 / KCTC 3163 / NCIMB 11718 / NCTC 13722 / AM63), this protein is DNA-directed RNA polymerase subunit beta'.